The sequence spans 538 residues: Bifunctional purine biosynthesis protein PurH (538 aa).

The 151-residue stretch at 8–158 folds into the MGS-like domain; that stretch reads FPIPDLHRVR…KNHVYTGVIT (151 aa).

Belongs to the PurH family.

It catalyses the reaction (6R)-10-formyltetrahydrofolate + 5-amino-1-(5-phospho-beta-D-ribosyl)imidazole-4-carboxamide = 5-formamido-1-(5-phospho-D-ribosyl)imidazole-4-carboxamide + (6S)-5,6,7,8-tetrahydrofolate. The enzyme catalyses IMP + H2O = 5-formamido-1-(5-phospho-D-ribosyl)imidazole-4-carboxamide. It functions in the pathway purine metabolism; IMP biosynthesis via de novo pathway; 5-formamido-1-(5-phospho-D-ribosyl)imidazole-4-carboxamide from 5-amino-1-(5-phospho-D-ribosyl)imidazole-4-carboxamide (10-formyl THF route): step 1/1. Its pathway is purine metabolism; IMP biosynthesis via de novo pathway; IMP from 5-formamido-1-(5-phospho-D-ribosyl)imidazole-4-carboxamide: step 1/1. This Bartonella henselae (strain ATCC 49882 / DSM 28221 / CCUG 30454 / Houston 1) (Rochalimaea henselae) protein is Bifunctional purine biosynthesis protein PurH.